The primary structure comprises 530 residues: Glucose-6-phosphate 1-dehydrogenase (530 aa).

Residues 53–60 (GASGDLAK), Arg87, Tyr162, and Lys186 contribute to the NADP(+) site. D-glucose 6-phosphate is bound by residues Lys186, 216-220 (HYLGK), Glu254, and Asp273. His278 (proton acceptor) is an active-site residue. Arg372 contacts NADP(+). Residues Lys375 and Arg380 each contribute to the D-glucose 6-phosphate site. Residues Lys381, Arg385, and Arg408 each contribute to the NADP(+) site. D-glucose 6-phosphate is bound at residue Gln410. Residues 416–418 (YAK), 436–438 (DLT), Arg502, Tyr518, and Trp524 contribute to the NADP(+) site.

Belongs to the glucose-6-phosphate dehydrogenase family.

The protein resides in the cytoplasm. It is found in the cytosol. The catalysed reaction is D-glucose 6-phosphate + NADP(+) = 6-phospho-D-glucono-1,5-lactone + NADPH + H(+). Its pathway is carbohydrate degradation; pentose phosphate pathway; D-ribulose 5-phosphate from D-glucose 6-phosphate (oxidative stage): step 1/3. Functionally, cytosolic glucose-6-phosphate dehydrogenase that catalyzes the first and rate-limiting step of the oxidative branch within the pentose phosphate pathway/shunt, an alternative route to glycolysis for the dissimilation of carbohydrates and a major source of reducing power and metabolic intermediates for fatty acid and nucleic acid biosynthetic processes. The polypeptide is Glucose-6-phosphate 1-dehydrogenase (g6pd) (Takifugu rubripes (Japanese pufferfish)).